Here is a 92-residue protein sequence, read N- to C-terminus: Cell division protein FtsB (92 aa).

The Cytoplasmic segment spans residues 1 to 3 (MKW). The helical transmembrane segment at 4–21 (VTVVLSFALVCCQYSLWF) threads the bilayer. Residues 22 to 92 (GKGSIGRNSS…TFYRLIRHNR (71 aa)) are Periplasmic-facing. Positions 28–50 (RNSSLREQIAVQEEKNQTLALRN) form a coiled coil.

The protein belongs to the FtsB family. Part of a complex composed of FtsB, FtsL and FtsQ.

The protein localises to the cell inner membrane. Its function is as follows. Essential cell division protein. May link together the upstream cell division proteins, which are predominantly cytoplasmic, with the downstream cell division proteins, which are predominantly periplasmic. The chain is Cell division protein FtsB from Neisseria meningitidis serogroup C (strain 053442).